Consider the following 504-residue polypeptide: Histidine ammonia-lyase (504 aa).

Residues 142–144 (ASG) constitute a cross-link (5-imidazolinone (Ala-Gly)). Residue S143 is modified to 2,3-didehydroalanine (Ser).

The protein belongs to the PAL/histidase family. Contains an active site 4-methylidene-imidazol-5-one (MIO), which is formed autocatalytically by cyclization and dehydration of residues Ala-Ser-Gly.

The protein localises to the cytoplasm. The catalysed reaction is L-histidine = trans-urocanate + NH4(+). Its pathway is amino-acid degradation; L-histidine degradation into L-glutamate; N-formimidoyl-L-glutamate from L-histidine: step 1/3. The protein is Histidine ammonia-lyase of Staphylococcus aureus (strain bovine RF122 / ET3-1).